The sequence spans 399 residues: Protein TWIN LOV 1 (399 aa).

Positions 26 to 97 (LWIKEALEEL…MEIREAIREE (72 aa)) constitute a PAS 1 domain. In terms of domain architecture, PAC 1 spans 98–153 (RSVQVSLLNYRKSGSPFWMLFHMCPVFGKDDGKVTNFVAVQVPISGREHHRKKLRN). The PAS 2 domain maps to 249 to 320 (SLVISLGRIK…EMKECILKGQ (72 aa)). Position 296 is an S-4a-FMN cysteine (C296). One can recognise a PAC 2 domain in the interval 320-376 (QSCTVQILNYSNRKDKSSFWNLLHISPVRNASGKTAYFVGVQVEASCRNTEIKELRP).

In terms of assembly, interacts with VTC2, VTC5 and BLH10. Post-translationally, FMN binds covalently to cysteine after exposure to blue light and is reversed in the dark.

The sequence is that of Protein TWIN LOV 1 (TLP1) from Arabidopsis thaliana (Mouse-ear cress).